The chain runs to 2311 residues: Proto-oncogene tyrosine-protein kinase ROS (2311 aa).

The first 24 residues, 1–24, serve as a signal peptide directing secretion; sequence MRNACLLLNRLGAFYFIWISAAYC. Topologically, residues 25–1873 are extracellular; sequence SFSKNCQDLC…LAKDTVTSPD (1849 aa). Asn-49, Asn-65, Asn-77, Asn-123, Asn-132, Asn-265, Asn-287, Asn-307, Asn-333, Asn-377, Asn-405, Asn-480, Asn-607, Asn-628, Asn-706, Asn-714, Asn-911, Asn-940, Asn-962, Asn-971, Asn-1110, Asn-1154, Asn-1180, Asn-1233, Asn-1255, Asn-1282, Asn-1316, Asn-1470, Asn-1509, Asn-1588, Asn-1628, Asn-1682, Asn-1696, and Asn-1730 each carry an N-linked (GlcNAc...) asparagine glycan. Fibronectin type-III domains lie at 110–202 and 203–294; these read KPGA…ASGV and PTTA…PESK. Residues 571–671 enclose the Fibronectin type-III 3 domain; sequence LPTLPRLVTV…EPFRGMTFEE (101 aa). Fibronectin type-III domains are found at residues 952–1047 and 1051–1158; these read VPES…APEG and APAN…SSDI. Fibronectin type-III domains are found at residues 1459–1569, 1570–1669, 1671–1766, and 1767–1868; these read DTEK…TLYG, VPEG…AKTF, TPLS…TTAG, and VPSK…AKDT. Residues 1754-1764 are compositionally biased toward low complexity; sequence STSSPTSFKTT. Residues 1754-1786 are disordered; sequence STSSPTSFKTTAGVPSKPGTPKRAEDSKNSVQW. The span at 1775-1786 shows a compositional bias: basic and acidic residues; sequence KRAEDSKNSVQW. Residues Asn-1792, Asn-1795, and Asn-1822 are each glycosylated (N-linked (GlcNAc...) asparagine). The chain crosses the membrane as a helical span at residues 1874-1898; it reads ITAIVAVIGAVVLGLTIIILFGFVW. The Cytoplasmic portion of the chain corresponds to 1899–2311; that stretch reads HQRWKSRKPA…SISSAELTSV (413 aa). The region spanning 1961 to 2240 is the Protein kinase domain; sequence LNLHKLLGSG…KLQEIRHSPL (280 aa). ATP-binding positions include 1967-1975 and Lys-1996; that span reads LGSGAFGEV. Asp-2095 serves as the catalytic Proton acceptor. Tyr-2131 carries the post-translational modification Phosphotyrosine; by autocatalysis.

The protein belongs to the protein kinase superfamily. Tyr protein kinase family. Insulin receptor subfamily. In terms of assembly, interacts with VAV3; constitutive interaction mediating VAV3 phosphorylation. Highest expression in kidney. Also expressed in gonad, thymus, bursa, brain and kidney.

It localises to the cell membrane. The catalysed reaction is L-tyrosyl-[protein] + ATP = O-phospho-L-tyrosyl-[protein] + ADP + H(+). Orphan receptor tyrosine kinase (RTK) that may activate several downstream signaling pathways related to cell differentiation, proliferation, growth and survival including the PI3 kinase-mTOR signaling pathway. Mediates the phosphorylation of PTPN11, an activator of this pathway. May also phosphorylate and activate the transcription factor STAT3 to control anchorage-independent cell growth. Mediates the phosphorylation and the activation of VAV3, a guanine nucleotide exchange factor regulating cell morphology. May activate other downstream signaling proteins including AKT1, MAPK1, MAPK3, IRS1, and PLCG2. The sequence is that of Proto-oncogene tyrosine-protein kinase ROS (ROS1) from Gallus gallus (Chicken).